The sequence spans 545 residues: GPI transamidase component PIG-T homolog (545 aa).

A signal peptide spans 1–22 (MKKNGCLLLFAYSLLSFSLTAA). Residues 23 to 493 (TIDETYDESL…PTPDFSMPYN (471 aa)) are Lumenal-facing. N-linked (GlcNAc...) asparagine glycosylation is found at Asn168, Asn227, Asn336, Asn391, and Asn467. The chain crosses the membrane as a helical span at residues 494-514 (VIIFTSTVIALTFGGIFNLLT). Topologically, residues 515–545 (RRFVPQQSKFQNRQPSMLQRLKEKIFHKKRG) are cytoplasmic.

The protein belongs to the PIGT family. As to quaternary structure, forms a complex with PIG-S homolog, PIG-U homolog and GPI8. The disulfide bond between PIGK/GPI8 and PIGT is important for normal enzyme activity.

Its subcellular location is the endoplasmic reticulum membrane. Its pathway is glycolipid biosynthesis; glycosylphosphatidylinositol-anchor biosynthesis. Its function is as follows. Component of the GPI transamidase complex. Involved in transfer of GPI to proteins. This is GPI transamidase component PIG-T homolog (gpi16) from Schizosaccharomyces pombe (strain 972 / ATCC 24843) (Fission yeast).